The chain runs to 519 residues: Exodeoxyribonuclease 7 large subunit (519 aa).

The tract at residues 500–519 is disordered; it reads VGRGKTRKPKEEPPAQGSLL.

The protein belongs to the XseA family. In terms of assembly, heterooligomer composed of large and small subunits.

Its subcellular location is the cytoplasm. The catalysed reaction is Exonucleolytic cleavage in either 5'- to 3'- or 3'- to 5'-direction to yield nucleoside 5'-phosphates.. In terms of biological role, bidirectionally degrades single-stranded DNA into large acid-insoluble oligonucleotides, which are then degraded further into small acid-soluble oligonucleotides. The sequence is that of Exodeoxyribonuclease 7 large subunit from Cereibacter sphaeroides (strain ATCC 17029 / ATH 2.4.9) (Rhodobacter sphaeroides).